The primary structure comprises 431 residues: MKIIDWNQLDTAAQAKTLTRPAQTIATQTREAVTALIEQVRRGGDTALRDITARFDGVDLATFEVTAAELAAAATAVAPELQHAMQTAAARIEAFHRAGMTNDYRVETAPGVVCERLVRPIARVGLYVPAGSAPLFSTALMLGVPARLAGCREVVLCTPPSKDGRANPAVLLAARLTGVTRVFTLGGAQAIAAMAYGTASVPTCDKVFGPGNSFVTEAKQQLAQAGVVAIDMPAGPSEVLVIADAAANPAFIAADLLSQAEHGPDSQVLLLSDSDALMTAVQNALALQLQQLSRAEIARQALAHSRFIKVATLETAFDISNRYAPEHLILALRQPRAWLHRVAAAGSVFLGDYTPEALGDYCSGTNHVLPTGGAARAYSGVSVSSFQNMISVQAASRSGIAEIGGCALTLARAEGLDAHANAVALRMGSAP.

Positions 127, 189, and 212 each coordinate NAD(+). Substrate is bound by residues Ser-237, Gln-259, and His-262. Zn(2+)-binding residues include Gln-259 and His-262. Active-site proton acceptor residues include Glu-326 and His-327. Substrate-binding residues include His-327, Asp-360, Glu-414, and His-419. Asp-360 contacts Zn(2+). Residue His-419 participates in Zn(2+) binding.

The protein belongs to the histidinol dehydrogenase family. Zn(2+) serves as cofactor.

It catalyses the reaction L-histidinol + 2 NAD(+) + H2O = L-histidine + 2 NADH + 3 H(+). Its pathway is amino-acid biosynthesis; L-histidine biosynthesis; L-histidine from 5-phospho-alpha-D-ribose 1-diphosphate: step 9/9. Functionally, catalyzes the sequential NAD-dependent oxidations of L-histidinol to L-histidinaldehyde and then to L-histidine. This Xylella fastidiosa (strain Temecula1 / ATCC 700964) protein is Histidinol dehydrogenase.